Reading from the N-terminus, the 222-residue chain is Glutathione S-transferase A4 (222 aa).

Met-1 carries the N-acetylmethionine modification. The GST N-terminal domain maps to 3–83 (TKPKLHYPNG…YIADKHHLFG (81 aa)). Residues Tyr-9, 54–55 (QV), and 67–68 (QT) contribute to the glutathione site. One can recognise a GST C-terminal domain in the interval 85-208 (DLKERTLIDM…EPGSKKKPPP (124 aa)).

This sequence belongs to the GST superfamily. Alpha family. As to quaternary structure, homodimer.

The protein resides in the cytoplasm. The catalysed reaction is RX + glutathione = an S-substituted glutathione + a halide anion + H(+). Conjugation of reduced glutathione to a wide number of exogenous and endogenous hydrophobic electrophiles. The protein is Glutathione S-transferase A4 (GSTA4) of Bos taurus (Bovine).